Reading from the N-terminus, the 364-residue chain is MAHRFPALTPEQKKELSEIAQRIVANGKGILAADESVGTMGNRLQRIKVENTEENRRQFRELLFSVDNSISQSIGGVILFHETLYQKDSQGNLFRNVLKEKGIVVGIKLDQGGAPLAGTNKETTIQGLDGLSERCAQYKKDGVDFGKWRAVLRIADQCPSSLAIQENANALARYASICQQNGLVPIVEPEVLPDGDHDLEHCQYVSEKVLAAVYKALNDHHVYLEGTLLKPNMVTAGHACTKKYTPEQVAMATVTALHRTVPAAVPGICFLSGGMSEEDATLNLNAINRCPLPRPWKLSFSYGRALQASALAAWGGKAANKKATQEAFMKRAMANCQAAQGQYVHTGSSGAAATQSLFTASYTY.

At Ala2 the chain carries N-acetylalanine. Lys13 carries the post-translational modification N6-succinyllysine. Phosphoserine is present on Ser36. Thr39 is subject to Phosphothreonine. Arg43 is a binding site for beta-D-fructose 1,6-bisphosphate. Position 89 is a phosphoserine (Ser89). A Phosphothreonine modification is found at Thr119. Lys121 is modified (N6-succinyllysine). A Phosphoserine modification is found at Ser132. Glu188 serves as the catalytic Proton acceptor. Phosphoserine is present on Ser206. Lys230 serves as the catalytic Schiff-base intermediate with dihydroxyacetone-P. 4 positions are modified to phosphoserine: Ser272, Ser276, Ser299, and Ser301. 272–274 (SGG) provides a ligand contact to beta-D-fructose 1,6-bisphosphate. Arg304 provides a ligand contact to beta-D-fructose 1,6-bisphosphate. A Phosphoserine modification is found at Ser309. N6-succinyllysine is present on Lys317.

It belongs to the class I fructose-bisphosphate aldolase family. As to quaternary structure, homotetramer. Interacts with BBS1, BBS2, BBS4 and BBS7. Forms a ternary complex with G6PD and TP53; this interaction is direct.

The protein resides in the cytoplasm. It localises to the cytosol. Its subcellular location is the cytoskeleton. The protein localises to the microtubule organizing center. It is found in the centrosome. The protein resides in the centriolar satellite. It carries out the reaction beta-D-fructose 1,6-bisphosphate = D-glyceraldehyde 3-phosphate + dihydroxyacetone phosphate. The enzyme catalyses beta-D-fructose 1-phosphate = D-glyceraldehyde + dihydroxyacetone phosphate. Its pathway is carbohydrate degradation; glycolysis; D-glyceraldehyde 3-phosphate and glycerone phosphate from D-glucose: step 4/4. It functions in the pathway carbohydrate biosynthesis; gluconeogenesis. The protein operates within carbohydrate metabolism; fructose metabolism. Functionally, catalyzes the aldol cleavage of fructose 1,6-biphosphate to form two triosephosphates dihydroxyacetone phosphate and D-glyceraldehyde 3-phosphate in glycolysis as well as the reverse stereospecific aldol addition reaction in gluconeogenesis. In fructolysis, metabolizes fructose 1-phosphate derived from the phosphorylation of dietary fructose by fructokinase into dihydroxyacetone phosphate and D-glyceraldehyde. Acts as an adapter independently of its enzymatic activity, exerts a tumor suppressor role by stabilizing the ternary complex with G6PD and TP53 to inhibit G6PD activity and keep oxidative pentose phosphate metabolism in check. The polypeptide is Fructose-bisphosphate aldolase B (Mus musculus (Mouse)).